The primary structure comprises 319 residues: Ankyrin repeat domain-containing protein 1 (319 aa).

Residues 55–89 (LGEEQRKSEKVREAELKKKKLEQRSKLENLEDLEI) adopt a coiled-coil conformation. ANK repeat units follow at residues 152-181 (YKRT…QIEF), 185-214 (LEST…KISA), 218-247 (LLST…DLNA), 251-280 (EGDT…DLNV), and 284-315 (AGKT…KNSR).

As to quaternary structure, interacts with TTN/titin. Interacts with YBX1. In terms of tissue distribution, expressed in heart, cardiac muscle.

It is found in the nucleus. Its function is as follows. May play an important role in endothelial cell activation. May act as a nuclear transcription factor that negatively regulates the expression of cardiac genes. This is Ankyrin repeat domain-containing protein 1 (Ankrd1) from Rattus norvegicus (Rat).